A 159-amino-acid chain; its full sequence is Phosphopantetheine adenylyltransferase (159 aa).

Threonine 9 serves as a coordination point for substrate. ATP contacts are provided by residues 9–10 (TF) and histidine 17. The substrate site is built by lysine 41, leucine 73, and arginine 87. ATP contacts are provided by residues 88–90 (GLR), glutamate 98, and 123–129 (YSFISST).

It belongs to the bacterial CoaD family. As to quaternary structure, homohexamer. Requires Mg(2+) as cofactor.

The protein localises to the cytoplasm. The catalysed reaction is (R)-4'-phosphopantetheine + ATP + H(+) = 3'-dephospho-CoA + diphosphate. It functions in the pathway cofactor biosynthesis; coenzyme A biosynthesis; CoA from (R)-pantothenate: step 4/5. Reversibly transfers an adenylyl group from ATP to 4'-phosphopantetheine, yielding dephospho-CoA (dPCoA) and pyrophosphate. This is Phosphopantetheine adenylyltransferase from Pseudomonas putida (strain GB-1).